The primary structure comprises 281 residues: NAC domain-containing protein 6 (281 aa).

An NAC domain is found at 4 to 156 (LPVGSRFCPT…QDALTGFADQ (153 aa)). 2 disordered regions span residues 84 to 109 (GGSEGGTWRSNDGKKEIKDGHMQKGD) and 211 to 249 (LEGHEDREQPEEAELTVTQQQQQQQQQQQRQEDCDVTQE). Basic and acidic residues predominate over residues 94-109 (NDGKKEIKDGHMQKGD). Residues 109–162 (DGLRASDDLQKVVLCRIRYKKEANVNEFGLVNHQAHQTQDALTGFADQLEMMLE) mediate DNA binding. Low complexity predominate over residues 229–239 (QQQQQQQQQQQ).

The protein resides in the nucleus. This is NAC domain-containing protein 6 (NAC006) from Arabidopsis thaliana (Mouse-ear cress).